The chain runs to 303 residues: Coenzyme PQQ synthesis protein B (303 aa).

This sequence belongs to the PqqB family.

It participates in cofactor biosynthesis; pyrroloquinoline quinone biosynthesis. May be involved in the transport of PQQ or its precursor to the periplasm. The protein is Coenzyme PQQ synthesis protein B of Pseudomonas putida (strain W619).